A 492-amino-acid chain; its full sequence is G2/mitotic-specific cyclin CLB2 (492 aa).

The segment at 1–176 is disordered; it reads MPQVTKTNNE…QPEVGERSQS (176 aa). The segment covering 23 to 33 has biased composition (polar residues); sequence QESISTIKNTT. The segment covering 34 to 58 has biased composition (low complexity); sequence ISNSQHKQQTQQQISSPPQVSVTSS. Residues 59 to 83 show a composition bias toward polar residues; the sequence is EGVSHVNTRQYLGDVSNQYITNAKP. Low complexity predominate over residues 111–135; sequence ASDNNNNGSTSSSSNSSNNNNNDAN. The Cyclin N-terminal domain occupies 208 to 334; the sequence is EIFSYYYELE…MLTILNFDLN (127 aa).

The protein belongs to the cyclin family. Cyclin AB subfamily.

2/mitotic-specific cyclin essential for the control of the cell cycle at the G2/M (mitosis) transition. G2/M cyclins accumulate steadily during G2 and are abruptly destroyed at mitosis. Degradation is necessary for the cell to exit from mitosis. Plays a role in morphogenesis by negatively regulating polarized growth. Through binding to CDC28 regulates cytokinesis, partly by phosphorylation of the actomyosin ring component IQG1. Also involved in the phosphorylation of CDC6 and CDC54. This is G2/mitotic-specific cyclin CLB2 (CLB2) from Candida albicans (strain SC5314 / ATCC MYA-2876) (Yeast).